The primary structure comprises 434 residues: Asparagine--tRNA ligase (434 aa).

This sequence belongs to the class-II aminoacyl-tRNA synthetase family.

It is found in the cytoplasm. It catalyses the reaction tRNA(Asn) + L-asparagine + ATP = L-asparaginyl-tRNA(Asn) + AMP + diphosphate + H(+). In Pyrococcus abyssi (strain GE5 / Orsay), this protein is Asparagine--tRNA ligase.